The primary structure comprises 539 residues: Chaperone Ric-8A (539 aa).

It belongs to the synembryn family.

It is found in the cytoplasm. The protein localises to the cell cortex. Functionally, chaperone that specifically binds and folds nascent G alpha proteins prior to G protein heterotrimer formation, promoting their stability and activity: folds GNAI1, GNAO1, GNA13 and GNAQ. Does not fold G(s) G-alpha proteins GNAS nor GNAL. Also acts as a guanine nucleotide exchange factor (GEF) for G alpha proteins by stimulating exchange of bound GDP for free GTP. This is Chaperone Ric-8A (ric8a) from Xenopus tropicalis (Western clawed frog).